A 174-amino-acid chain; its full sequence is Probasin (174 aa).

An N-terminal signal peptide occupies residues 1 to 18 (MMRVIILLLTLHVLGVSS). C77 and C168 are disulfide-bonded.

It belongs to the calycin superfamily. Lipocalin family.

It is found in the secreted. The protein is Probasin (Pbsn) of Mus musculus (Mouse).